The primary structure comprises 457 residues: Multidrug resistance protein MdtK (457 aa).

Transmembrane regions (helical) follow at residues 11 to 31 (LLAL…MGVV), 53 to 73 (IWLP…PIIA), 93 to 113 (WLAI…KFLI), 127 to 147 (AVGF…YQVL), 160 to 180 (GMVI…IFIY), 188 to 208 (LGGV…FLLM), 243 to 263 (LPIA…ALLI), 280 to 300 (FSSL…IRVG), 316 to 336 (YTGI…SIIL), 357 to 377 (LMLF…GAGV), 387 to 407 (IFYI…YILG), and 418 to 438 (PQGF…MIFA).

It belongs to the multi antimicrobial extrusion (MATE) (TC 2.A.66.1) family. MdtK subfamily.

The protein localises to the cell inner membrane. Its function is as follows. Multidrug efflux pump that functions probably as a Na(+)/drug antiporter. This chain is Multidrug resistance protein MdtK, found in Photorhabdus laumondii subsp. laumondii (strain DSM 15139 / CIP 105565 / TT01) (Photorhabdus luminescens subsp. laumondii).